A 187-amino-acid polypeptide reads, in one-letter code: MTRVYVGNLDPRVTERELEDEFKAFGVLRNVWVARRPPGYAFLEFDDERDALDAISALDRKNGWRVELSHKDKGGRGGGGGRRGGIEDSKCYECGELGHFARECRRGRGSVRRRSPSPRRRRSPDYGYARRSISPRGRRSPPRRRSVTPPRRGRSYSRSPPYRGSRRDSPRRRDSPYGRRSPYANGV.

The 72-residue stretch at 2-73 folds into the RRM domain; the sequence is TRVYVGNLDP…WRVELSHKDK (72 aa). Disordered regions lie at residues 68–89 and 105–187; these read LSHK…IEDS and RRGR…ANGV. The CCHC-type zinc finger occupies 89–106; sequence SKCYECGELGHFARECRR. Over residues 107-122 the composition is skewed to basic residues; the sequence is GRGSVRRRSPSPRRRR. Phosphoserine is present on residues serine 123, serine 132, serine 134, serine 140, serine 146, and serine 159. Residues 136–155 are compositionally biased toward basic residues; it reads RGRRSPPRRRSVTPPRRGRS. Basic and acidic residues predominate over residues 165–177; sequence SRRDSPRRRDSPY. Low complexity predominate over residues 178–187; the sequence is GRRSPYANGV. The residue at position 181 (serine 181) is a Phosphoserine.

The protein belongs to the splicing factor SR family. RSZ subfamily. Component of the spliceosome. Interacts with SNRNP35, AFC2, CYP59, RS2Z33 and RNU1. Interacts with MOS14. Post-translationally, extensively phosphorylated on serine residues in the RS domain. Phosphorylated by AFC2. In terms of tissue distribution, expressed in roots, leaves, flowers and siliques.

The protein localises to the nucleus speckle. In terms of biological role, probably involved in intron recognition and spliceosome assembly. In Arabidopsis thaliana (Mouse-ear cress), this protein is Serine/arginine-rich splicing factor RSZ21 (RSZ21).